The chain runs to 211 residues: MPKKPIIIGVTGGSGGGKTSVSRAILSNFPDEKIAMIEHDSYYKDQSHLTFEERVSTNYDHPFAFDTDLMIEHINELIAGRPVDIPIYDYTQHTRSNKTYRQEPQDVFIVEGILVLEDKRLRDLMDIKLFVDTDDDIRIIRRIKRDMEERGRSLDSIIDQYNSVVKPMYHQFIEPTKRYADVVIPEGVSNTVAIDLINTKVASILEESKKA.

12–19 is an ATP binding site; that stretch reads GGSGGGKT.

The protein belongs to the uridine kinase family.

The protein localises to the cytoplasm. It carries out the reaction uridine + ATP = UMP + ADP + H(+). The enzyme catalyses cytidine + ATP = CMP + ADP + H(+). The protein operates within pyrimidine metabolism; CTP biosynthesis via salvage pathway; CTP from cytidine: step 1/3. It participates in pyrimidine metabolism; UMP biosynthesis via salvage pathway; UMP from uridine: step 1/1. In Streptococcus thermophilus (strain CNRZ 1066), this protein is Uridine kinase.